A 66-amino-acid chain; its full sequence is Large ribosomal subunit protein bL35 (66 aa).

Basic residues predominate over residues 1 to 15 (MPKMKTKSSAKKRFK). The interval 1–32 (MPKMKTKSSAKKRFKMTATGKVRAGQAGKRHG) is disordered.

This sequence belongs to the bacterial ribosomal protein bL35 family.

This Dinoroseobacter shibae (strain DSM 16493 / NCIMB 14021 / DFL 12) protein is Large ribosomal subunit protein bL35.